Reading from the N-terminus, the 391-residue chain is Chorismate synthase (391 aa).

Residue Arg-48 participates in NADP(+) binding. Residues 126–128, Gly-287, 302–306, and Arg-329 each bind FMN; these read RSS and KPTSS.

Belongs to the chorismate synthase family. FMNH2 is required as a cofactor.

It catalyses the reaction 5-O-(1-carboxyvinyl)-3-phosphoshikimate = chorismate + phosphate. The protein operates within metabolic intermediate biosynthesis; chorismate biosynthesis; chorismate from D-erythrose 4-phosphate and phosphoenolpyruvate: step 7/7. Its function is as follows. Catalyzes the anti-1,4-elimination of the C-3 phosphate and the C-6 proR hydrogen from 5-enolpyruvylshikimate-3-phosphate (EPSP) to yield chorismate, which is the branch point compound that serves as the starting substrate for the three terminal pathways of aromatic amino acid biosynthesis. This reaction introduces a second double bond into the aromatic ring system. The polypeptide is Chorismate synthase (Sulfolobus acidocaldarius (strain ATCC 33909 / DSM 639 / JCM 8929 / NBRC 15157 / NCIMB 11770)).